Reading from the N-terminus, the 208-residue chain is Large ribosomal subunit protein uL3 (208 aa).

Residues 116–148 are disordered; the sequence is GFQGVIKRHGQSRGPMAHGSRYHRRPGSMGPVA.

The protein belongs to the universal ribosomal protein uL3 family. Part of the 50S ribosomal subunit. Forms a cluster with proteins L14 and L19.

Its function is as follows. One of the primary rRNA binding proteins, it binds directly near the 3'-end of the 23S rRNA, where it nucleates assembly of the 50S subunit. The chain is Large ribosomal subunit protein uL3 from Streptococcus pyogenes serotype M5 (strain Manfredo).